Consider the following 164-residue polypeptide: Dihydrofolate reductase (164 aa).

In terms of domain architecture, DHFR spans 2–162; that stretch reads NISIIVAMSQ…FYVTFKILKK (161 aa). 6–8 provides a ligand contact to substrate; the sequence is IVA. NADP(+)-binding positions include 7–8 and 15–20; these read VA and IGQKNS. Aspartate 28 contacts substrate. 44-47 is a binding site for NADP(+); that stretch reads GRKT. Arginine 58 is a binding site for substrate. NADP(+) is bound by residues 63–66 and 96–101; these read LTRQ and IGGSNL. Threonine 115 lines the substrate pocket.

The protein belongs to the dihydrofolate reductase family.

The enzyme catalyses (6S)-5,6,7,8-tetrahydrofolate + NADP(+) = 7,8-dihydrofolate + NADPH + H(+). Its pathway is cofactor biosynthesis; tetrahydrofolate biosynthesis; 5,6,7,8-tetrahydrofolate from 7,8-dihydrofolate: step 1/1. In terms of biological role, key enzyme in folate metabolism. Catalyzes an essential reaction for de novo glycine and purine synthesis, and for DNA precursor synthesis. The sequence is that of Dihydrofolate reductase (folA) from Buchnera aphidicola subsp. Baizongia pistaciae (strain Bp).